The sequence spans 1263 residues: DNA-directed RNA polymerase subunit beta (1263 aa).

This sequence belongs to the RNA polymerase beta chain family. The RNAP catalytic core consists of 2 alpha, 1 beta, 1 beta' and 1 omega subunit. When a sigma factor is associated with the core the holoenzyme is formed, which can initiate transcription.

The enzyme catalyses RNA(n) + a ribonucleoside 5'-triphosphate = RNA(n+1) + diphosphate. Functionally, DNA-dependent RNA polymerase catalyzes the transcription of DNA into RNA using the four ribonucleoside triphosphates as substrates. This Thermotoga sp. (strain RQ2) protein is DNA-directed RNA polymerase subunit beta.